Here is a 297-residue protein sequence, read N- to C-terminus: Tyrosine recombinase XerC (297 aa).

In terms of domain architecture, Core-binding (CB) spans 1–83 (MAILDEFDEH…AVKAFTAWAK (83 aa)). The Tyr recombinase domain occupies 104 to 291 (TLPAVLRQDQ…AVSRLRVVHD (188 aa)). Residues Arg-148, Lys-172, His-243, Arg-246, and His-269 contribute to the active site. Residue Tyr-278 is the O-(3'-phospho-DNA)-tyrosine intermediate of the active site.

This sequence belongs to the 'phage' integrase family. XerC subfamily. As to quaternary structure, forms a cyclic heterotetrameric complex composed of two molecules of XerC and two molecules of XerD.

It localises to the cytoplasm. Its function is as follows. Site-specific tyrosine recombinase, which acts by catalyzing the cutting and rejoining of the recombining DNA molecules. The XerC-XerD complex is essential to convert dimers of the bacterial chromosome into monomers to permit their segregation at cell division. It also contributes to the segregational stability of plasmids. The sequence is that of Tyrosine recombinase XerC from Mycobacterium leprae (strain TN).